Here is a 326-residue protein sequence, read N- to C-terminus: Diphthine methyltransferase (326 aa).

4 WD repeats span residues 65-105 (MHCD…ELMF), 113-152 (DSSV…IKNK), 155-195 (EHDY…SCIW), and 293-326 (EHES…WEDI).

Belongs to the DPH7 family.

Its subcellular location is the cytoplasm. It is found in the nucleus. The enzyme catalyses diphthine methyl ester-[translation elongation factor 2] + H2O = diphthine-[translation elongation factor 2] + methanol + H(+). Its pathway is protein modification; peptidyl-diphthamide biosynthesis. In terms of biological role, catalyzes the demethylation of diphthine methyl ester to form diphthine, an intermediate in diphthamide biosynthesis, a post-translational modification of histidine which occurs in translation elongation factor 2 (eft201 and eft202). In Schizosaccharomyces pombe (strain 972 / ATCC 24843) (Fission yeast), this protein is Diphthine methyltransferase (rrt2).